Consider the following 224-residue polypeptide: Lipoprotein-releasing system ATP-binding protein LolD (224 aa).

The ABC transporter domain occupies 6–224; the sequence is LEFCNVSKFF…IVNHSLISSI (219 aa). Residue 43–50 coordinates ATP; it reads GASGVGKT.

It belongs to the ABC transporter superfamily. Lipoprotein translocase (TC 3.A.1.125) family. In terms of assembly, the complex is composed of two ATP-binding proteins (LolD) and two transmembrane proteins (LolC and LolE).

Its subcellular location is the cell inner membrane. In terms of biological role, part of the ABC transporter complex LolCDE involved in the translocation of mature outer membrane-directed lipoproteins, from the inner membrane to the periplasmic chaperone, LolA. Responsible for the formation of the LolA-lipoprotein complex in an ATP-dependent manner. This chain is Lipoprotein-releasing system ATP-binding protein LolD, found in Neorickettsia sennetsu (strain ATCC VR-367 / Miyayama) (Ehrlichia sennetsu).